A 269-amino-acid chain; its full sequence is Peptide deformylase 1A, chloroplastic/mitochondrial (269 aa).

A chloroplast and mitochondrion-targeting transit peptide spans 1 to 60 (MGLHRDEATAMETLFRVSLRLLPVSAAVTCRSIRFPVSRPGSSHLLNRKLYNLPTSSSSS). Residues 123-126 (PGVG) and glycine 187 contribute to the substrate site. Residue cysteine 188 participates in Zn(2+) binding. Residues 191-196 (VDGFRA) form a dimerization region. Histidine 230 provides a ligand contact to Zn(2+). The active site involves glutamate 231. Residue histidine 234 participates in Zn(2+) binding. The tract at residues 236–254 (DGNLYVDKMVPRTFRTVDN) is dimerization.

Belongs to the polypeptide deformylase family. As to quaternary structure, homodimer. Requires Zn(2+) as cofactor. In terms of tissue distribution, expressed in roots, leaves, flowers and siliques.

The protein resides in the plastid. It localises to the chloroplast stroma. The protein localises to the mitochondrion. The catalysed reaction is N-terminal N-formyl-L-methionyl-[peptide] + H2O = N-terminal L-methionyl-[peptide] + formate. With respect to regulation, inhibited by actinonin. Functionally, removes the formyl group from the N-terminal Met of newly synthesized proteins. This is Peptide deformylase 1A, chloroplastic/mitochondrial (PDF1A) from Arabidopsis thaliana (Mouse-ear cress).